The chain runs to 252 residues: Large ribosomal subunit protein uL30 (252 aa).

This sequence belongs to the universal ribosomal protein uL30 family.

In terms of biological role, binds to G-rich structures in 28S rRNA and in mRNAs. Plays a regulatory role in the translation apparatus; inhibits cell-free translation of mRNAs. The protein is Large ribosomal subunit protein uL30 (RpL7) of Drosophila melanogaster (Fruit fly).